The following is a 35-amino-acid chain: Sperm protamine alpha isoform 1 (35 aa).

The disordered stretch occupies residues 1–35 (MPRRRRRASRPVRRRRRARRSTAVRRRRRVVRRRR). Phosphoserine occurs at positions 9 and 21.

Phosphorylated in immature sperm. Dephosphorylated in mature sperm allowing a stronger interaction with DNA. Gonads.

It is found in the nucleus. It localises to the chromosome. In terms of biological role, protamines substitute for histones in the chromatin of sperm during the haploid phase of spermatogenesis. They compact sperm DNA into a highly condensed, stable and inactive complex. This chain is Sperm protamine alpha isoform 1, found in Scomber scombrus (Atlantic mackerel).